We begin with the raw amino-acid sequence, 310 residues long: p-hydroxybenzoic acid efflux pump subunit AaeA (310 aa).

Residues 12 to 32 (AITVVLVILAFIAIFNAWVYY) form a helical membrane-spanning segment.

The protein belongs to the membrane fusion protein (MFP) (TC 8.A.1) family.

Its subcellular location is the cell inner membrane. Forms an efflux pump with AaeB. In Escherichia coli O139:H28 (strain E24377A / ETEC), this protein is p-hydroxybenzoic acid efflux pump subunit AaeA.